Consider the following 264-residue polypeptide: uncharacterized protein (264 aa).

Positions 1-20 are disordered; sequence MENIEKKCQPETINEDNNDE.

Belongs to the mimivirus R73/L269/L862 family.

This is an uncharacterized protein from Acanthamoeba polyphaga mimivirus (APMV).